We begin with the raw amino-acid sequence, 412 residues long: LMGVIYSTLAIAPVQFDREKVFRVKLQDEKQASILKNLTQTIELDFWYPDAIHDIAVNMTVDFRVTEKESQTIQSTLEQHKMDYEILINDLQEEIDKQFDVKEEIAGRHSYAKYNDWNKIVSWTEKMVEKHPEMVSRIKIGSTVEDNPLYVLKIGRKDGERKAIFMDCGIHAREWVSPAFCQWFVYQAAKSYGKNKIMTKLLDRMNFYVLPVFNVDGYIWSWTKDRMWRKNRSKNPNSTCIGTDLNRNFDVSWDSSPNTDNPCLSVYRGPAPESEKETKAVTNFIRSHLNSIKAYITFHSYSQMLLFPYGYTIKLPPNHQDLLKVARIATDVLSSRYETRYIYGPIASTIYKTSGSSLDWAYDLGIKHTFAFELRDKGKSGFLLPESRIKPTCKETMLSVKFIAKYILKHTS.

An N-terminal signal peptide occupies residues 1-10; sequence LMGVIYSTLA. The propeptide at 11-104 is activation peptide; sequence IAPVQFDREK…IDKQFDVKEE (94 aa). A Peptidase M14 domain is found at 113 to 407; sequence KYNDWNKIVS…LSVKFIAKYI (295 aa). 2 disulfides stabilise this stretch: C168–C181 and C240–C263. H171 and E174 together coordinate Zn(2+). H299 serves as a coordination point for Zn(2+). E373 acts as the Proton donor/acceptor in catalysis.

The protein belongs to the peptidase M14 family. Zn(2+) is required as a cofactor.

Its subcellular location is the cytoplasmic vesicle. The protein localises to the secretory vesicle. It catalyses the reaction Release of a C-terminal amino acid, but little or no action with -Asp, -Glu, -Arg, -Lys or -Pro.. The sequence is that of Mast cell carboxypeptidase A (Cpa3) from Rattus norvegicus (Rat).